An 83-amino-acid chain; its full sequence is UPF0457 protein YnzG (83 aa).

This sequence belongs to the UPF0457 family.

This is UPF0457 protein YnzG (ynzG) from Bacillus subtilis (strain 168).